The primary structure comprises 414 residues: Zinc metalloproteinase nas-26 (414 aa).

Residues 1–20 (MTSSLVLILAPLALVAIGEA) form the signal peptide. A propeptide spanning residues 21-61 (AFGNSSKIFEIPGLEVMASDKYPHFTTIETVSRTKVHRHRR) is cleaved from the precursor. Asn24 is a glycosylation site (N-linked (GlcNAc...) asparagine). Positions 62-264 (EVIAGQIYDW…AKVINDIYCP (203 aa)) constitute a Peptidase M12A domain. 6 disulfides stabilise this stretch: Cys103-Cys263, Cys126-Cys146, Cys267-Cys286, Cys289-Cys300, Cys308-Cys331, and Cys358-Cys378. A Zn(2+)-binding site is contributed by His154. The active site involves Glu155. Zn(2+)-binding residues include His158 and His164. Residues 251–307 (AFLDAKVINDIYCPNACQGRNHLNCLAGGYPDPNNCNVCRCPEGLGGPDCGRLQPSP) enclose the EGF-like domain. One can recognise a CUB domain in the interval 308-414 (CGGEIHASDQ…RFSLRFRRQA (107 aa)).

Zn(2+) serves as cofactor.

Its subcellular location is the secreted. Its function is as follows. Metalloprotease. The sequence is that of Zinc metalloproteinase nas-26 (toh-1) from Caenorhabditis elegans.